Consider the following 230-residue polypeptide: Ribosomal RNA small subunit methyltransferase G (230 aa).

S-adenosyl-L-methionine is bound by residues G93, L98, 144–145 (IE), and R158.

The protein belongs to the methyltransferase superfamily. RNA methyltransferase RsmG family.

The protein resides in the cytoplasm. It carries out the reaction guanosine(527) in 16S rRNA + S-adenosyl-L-methionine = N(7)-methylguanosine(527) in 16S rRNA + S-adenosyl-L-homocysteine. Its function is as follows. Specifically methylates the N7 position of guanine in position 527 of 16S rRNA. The protein is Ribosomal RNA small subunit methyltransferase G of Bordetella parapertussis (strain 12822 / ATCC BAA-587 / NCTC 13253).